A 266-amino-acid chain; its full sequence is Chymotrypsin-like elastase family member 1 (266 aa).

The signal sequence occupies residues 1–16 (MLRFLVFATLVLYGHS). A propeptide spans 17–26 (TQDFPETNAR) (activation peptide). The Peptidase S1 domain maps to 27–264 (VVGGTEAGRN…YISWINKTIA (238 aa)). An intrachain disulfide couples C56 to C72. The active-site Charge relay system is the H71. Ca(2+)-binding residues include D85, N87, Q90, and E95. N87 is a glycosylation site (N-linked (GlcNAc...) asparagine). D119 acts as the Charge relay system in catalysis. 3 disulfides stabilise this stretch: C153–C220, C184–C200, and C210–C240. S214 serves as the catalytic Charge relay system. Residues N241 and N260 are each glycosylated (N-linked (GlcNAc...) asparagine).

It belongs to the peptidase S1 family. Elastase subfamily. Ca(2+) serves as cofactor.

It is found in the secreted. It carries out the reaction Hydrolysis of proteins, including elastin. Preferential cleavage: Ala-|-Xaa.. Functionally, serine proteases that hydrolyze many proteins in addition to elastin. The protein is Chymotrypsin-like elastase family member 1 (CELA1) of Macaca fascicularis (Crab-eating macaque).